A 332-amino-acid chain; its full sequence is 1-acyl-sn-glycerol-3-phosphate acyltransferase CHLREDRAFT_174358 (332 aa).

A helical membrane pass occupies residues 96–116 (FLLSLPLFVTMMVMAPLVLAF). The HXXXXD motif motif lies at 163–168 (HQSFLD). Residues 185–205 (TSNFLIPIIGWSMFLTGHVMI) traverse the membrane as a helical segment. The short motif at 235-238 (EGTR) is the EGTR motif element.

Belongs to the 1-acyl-sn-glycerol-3-phosphate acyltransferase family.

Its subcellular location is the membrane. It catalyses the reaction a 1-acyl-sn-glycero-3-phosphate + an acyl-CoA = a 1,2-diacyl-sn-glycero-3-phosphate + CoA. It functions in the pathway phospholipid metabolism; CDP-diacylglycerol biosynthesis; CDP-diacylglycerol from sn-glycerol 3-phosphate: step 2/3. Converts lysophosphatidic acid (LPA) into phosphatidic acid by incorporating an acyl moiety at the sn-2 position of the glycerol backbone. The polypeptide is 1-acyl-sn-glycerol-3-phosphate acyltransferase CHLREDRAFT_174358 (Chlamydomonas reinhardtii (Chlamydomonas smithii)).